We begin with the raw amino-acid sequence, 101 residues long: Small ribosomal subunit protein uS14 (101 aa).

It belongs to the universal ribosomal protein uS14 family. Part of the 30S ribosomal subunit. Contacts proteins S3 and S10.

Binds 16S rRNA, required for the assembly of 30S particles and may also be responsible for determining the conformation of the 16S rRNA at the A site. The chain is Small ribosomal subunit protein uS14 from Paracoccus denitrificans (strain Pd 1222).